A 1402-amino-acid chain; its full sequence is Roundabout homolog 3 (1402 aa).

The signal sequence occupies residues Met-1–Ala-20. The Extracellular segment spans residues Arg-21–Pro-891. N-linked (GlcNAc...) asparagine glycans are attached at residues Asn-25, Asn-34, and Asn-53. 5 Ig-like C2-type domains span residues Pro-64–Glu-160, Asp-166–Val-253, Pro-258–Ser-342, Pro-347–Glu-440, and Pro-450–Thr-531. The cysteines at positions 85 and 143 are disulfide-linked. An N-linked (GlcNAc...) asparagine glycan is attached at Asn-156. 2 cysteine pairs are disulfide-bonded: Cys-187/Cys-236 and Cys-279/Cys-326. N-linked (GlcNAc...) asparagine glycans are attached at residues Asn-355, Asn-363, Asn-410, Asn-459, and Asn-503. The cysteines at positions 368 and 424 are disulfide-linked. Cys-472 and Cys-521 are oxidised to a cystine. Disordered stretches follow at residues Glu-540–Gln-561 and Glu-639–Trp-662. The segment covering Gly-543 to Pro-552 has biased composition (low complexity). Fibronectin type-III domains are found at residues Pro-558–Ser-652, Ala-672–Glu-766, and Pro-771–Ala-869. Polar residues predominate over residues Pro-646–Ser-655. N-linked (GlcNAc...) asparagine glycosylation is found at Asn-784, Asn-813, and Asn-820. The chain crosses the membrane as a helical span at residues Ala-892–Leu-912. Topologically, residues Tyr-913–Arg-1402 are cytoplasmic. Disordered stretches follow at residues Ser-965–Pro-989, Phe-1032–Ala-1307, and Gly-1340–Arg-1402. 2 stretches are compositionally biased toward polar residues: residues Gln-1038 to Gln-1049 and Pro-1142 to Ser-1152. Positions Pro-1158–Asp-1169 are enriched in pro residues. Low complexity-rich tracts occupy residues Arg-1178 to Ser-1191 and Ala-1215 to Pro-1228. The segment covering His-1243–Lys-1254 has biased composition (basic residues). At Ser-1263 the chain carries Phosphoserine. A compositionally biased stretch (basic and acidic residues) spans Leu-1294–Val-1304. The segment covering Ser-1346–Ala-1357 has biased composition (polar residues). Residues Gly-1358 to Ser-1371 show a composition bias toward low complexity.

Belongs to the immunoglobulin superfamily. ROBO family. Interacts (via Fibronectin type-III 1 domain) with NELL2 (via the EGF domains) with a 3:3 stoichiometry; this interaction promotes oligomerization of ROBO3 resulting in the repulsion of commissural axons in the midline. In terms of tissue distribution, detected in embryonal spinal cord and hindbrain.

It localises to the membrane. In terms of biological role, receptor involved in axon guidance during development. Acts as a multifunctional regulator of pathfinding that simultaneously mediates NELL2 repulsion, inhibits SLIT repulsion, and facilitates Netrin-1/NTN1 attraction. In spinal cord development plays a role in guiding commissural axons probably by preventing premature sensitivity to Slit proteins thus inhibiting Slit signaling through ROBO1/ROBO2. Binding OF NELL2 to the receptor ROBO3 promotes oligomerization of ROBO3, resulting in the repulsion of commissural axons in the midline. ROBO3 also indirectly boosts axon attraction to NTN1 without interacting with NTN1 itself. Its function is as follows. Mediates NELL2 premature repulsion of commissural axons during midline crossing. Functionally, after midline crossing by the commissural axons, may, in concert with ROBO1 and ROBO2, prevent midline recrossing. Does not mediate NELL2 signaling. This is Roundabout homolog 3 from Mus musculus (Mouse).